The chain runs to 245 residues: Eukaryotic translation initiation factor 3 subunit K (245 aa).

The region spanning 46 to 227 (YDCYANLALL…EAKGTVVREN (182 aa)) is the PCI domain.

The protein belongs to the eIF-3 subunit K family. As to quaternary structure, component of the eukaryotic translation initiation factor 3 (eIF-3) complex.

The protein localises to the cytoplasm. In terms of biological role, component of the eukaryotic translation initiation factor 3 (eIF-3) complex, which is involved in protein synthesis of a specialized repertoire of mRNAs and, together with other initiation factors, stimulates binding of mRNA and methionyl-tRNAi to the 40S ribosome. The eIF-3 complex specifically targets and initiates translation of a subset of mRNAs involved in cell proliferation. The polypeptide is Eukaryotic translation initiation factor 3 subunit K (Phaeosphaeria nodorum (strain SN15 / ATCC MYA-4574 / FGSC 10173) (Glume blotch fungus)).